The chain runs to 1881 residues: Endoribonuclease Dicer-S (1881 aa).

One can recognise a Helicase ATP-binding domain in the interval 41–217; sequence LLEAALDHNI…DLEEKIQNLE (177 aa). 54-61 lines the ATP pocket; that stretch reads LNSGSGKT. The short motif at 165–168 is the DECH box element; it reads DECH. The Helicase C-terminal domain occupies 425 to 594; sequence SFPSPFTNIL…SMDCGNTESE (170 aa). The 93-residue stretch at 622–714 folds into the Dicer dsRNA-binding fold domain; that stretch reads AIGHINRYCA…MPVGKETVKY (93 aa). A PAZ domain is found at 887 to 1034; it reads KFVEDIEKSE…LVPELCAIHP (148 aa). 2 RNase III domains span residues 1249–1380 and 1625–1783; these read TSDI…ETSG and FENF…MDSG. Positions 1293, 1371, 1374, 1664, 1769, and 1772 each coordinate Mg(2+). The region spanning 1808–1873 is the DRBM domain; the sequence is VPRSPVRELL…ARRALRSLKA (66 aa).

This sequence belongs to the helicase family. Dicer subfamily. Component of the RISC loading complex (RLC), or micro-RNA (miRNA) loading complex (miRLC), which is composed of dicer1, ago2 and tarbp2; dicer1 and tarbp2 are required to process precursor miRNAs (pre-miRNAs) to mature miRNAs and then load them onto ago2. Note that the trimeric RLC/miRLC is also referred to as RISC. Requires Mg(2+) as cofactor. Mn(2+) serves as cofactor.

It localises to the cytoplasm. The enzyme catalyses Endonucleolytic cleavage to 5'-phosphomonoester.. In terms of biological role, double-stranded RNA (dsRNA) endoribonuclease playing a central role in short dsRNA-mediated post-transcriptional gene silencing. Cleaves naturally occurring long dsRNAs and short hairpin pre-microRNAs (miRNA) into fragments of twenty-one to twenty-three nucleotides with 3' overhang of two nucleotides, producing respectively short interfering RNAs (siRNA) and mature microRNAs. SiRNAs and miRNAs serve as guide to direct the RNA-induced silencing complex (RISC) to complementary RNAs to degrade them or prevent their translation. Gene silencing mediated by siRNAs, also called RNA interference, controls the elimination of transcripts from mobile and repetitive DNA elements of the genome but also the degradation of exogenous RNA of viral origin for instance. The miRNA pathway on the other side is a mean to specifically regulate the expression of target genes. During embryonic development, at the left-right organizer, post-transcriptionally regulates the expression of dand5 in flow sensor cells. In post-flow stages, acts along with Bicc1 to repress dand5 mRNA translation and decay. Decreased Dand5 expression lifts repression of Nodal and defines leftness by induction of the lateral plate mesoderm Nodal signaling cascade. This Xenopus laevis (African clawed frog) protein is Endoribonuclease Dicer-S (dicer1.S).